A 659-amino-acid chain; its full sequence is MAKIHELSEILANQIAAGEVVERPASVVKELVENSIDAGAKQIDIIIEDAGLKSIQIIDDGNGIEAEDVETAFKRHATSKIIDRKDLFKVHTLGFRGEALPSIASVSDVVMETAVSGRAGTKIHIKGGEVLEKTLSASREGTTITVSDLFYNTPARLKYLKSVQTELSYISDIVNRLALSHTDVALSLTNNGRQLLQSAGNGNLQQTIGAIYGVQNARQMIKFEDANLDFKISGYTSLPKLTRASRNYISLLVNGRYVKNFQLTKAVIEGYGSKLMTGRYPITVLSIELDPTLVDVNVHPTKQEIKISKEDELVTFIQKTIFERIGQENLIPDGLQNIKSKTKEKLDFEQLKVGLNEASKQYQTKQHRTGITSEVTAALFGEKLTKDESQTQTNEKIKEETKVELSPIIIKDKQDLKSDRVKEWDEKYQSRNKETEVTSIAEKNGSVDDKRKDTPRFPTLRYIGQMHGTFLFAEGEEGLYIVDQHAAQERVKYEYYREEIGKVSPTQQNLLVPIVLTYPTTDALIIDENIDKLKELGIYLEDFGQNTYIIRQHPTWFKEGQEESIIREMIDYFLKDRKLSIAKFREKTAIMMSCKRSIKANHHLDDKQAKSILEQLKTCENPFNCPHGRPVLVKLSNKDLEHMFKRIQDPHHTGILEED.

The protein belongs to the DNA mismatch repair MutL/HexB family.

This protein is involved in the repair of mismatches in DNA. It is required for dam-dependent methyl-directed DNA mismatch repair. May act as a 'molecular matchmaker', a protein that promotes the formation of a stable complex between two or more DNA-binding proteins in an ATP-dependent manner without itself being part of a final effector complex. The protein is DNA mismatch repair protein MutL of Ligilactobacillus salivarius (strain UCC118) (Lactobacillus salivarius).